A 363-amino-acid chain; its full sequence is MADKVNVCIVGSGNWGSAIAKIVGANAAALPEFEERVTMFVYEELIDGKKLTEIINETHENVKYLKGHKLPPNVVAVPDLVEAAKNADILIFVVPHQFIPNFCKQLLGKIKPNAIAISLIKGFDKAEGGGIDLISHIITRHLKIPCAVLMGANLANEVAEGNFCETTIGCTDKKYGKVLRDLFQANHFRVVVVDDADAVEVCGALKNIVACGAGFVDGLKLGDNTKAAVIRLGLMEMIRFVDVFYPGSKLSTFFESCGVADLITTCYGGRNRRVSEAFVTSGKTIEELEKEMLNGQKLQGPPTAEEVNYMLKNKGLEDKFPLFTAIHKICTNQLKPNDLIDCIRNHPEHMDTSIMPSPKLQNL.

Residues 11–16, F98, K121, and A155 each bind NAD(+); that span reads GSGNWG. Residue K121 coordinates substrate. Residue K206 is the Proton acceptor of the active site. Positions 270 and 299 each coordinate NAD(+). 270–271 provides a ligand contact to substrate; that stretch reads RN.

It belongs to the NAD-dependent glycerol-3-phosphate dehydrogenase family. Homodimer. In terms of tissue distribution, isoform GPDH-1 is predominant in thorax and isoform GPDH-3 in abdomen.

It localises to the cytoplasm. It catalyses the reaction sn-glycerol 3-phosphate + NAD(+) = dihydroxyacetone phosphate + NADH + H(+). It functions in the pathway phospholipid metabolism; alpha-glycerophosphate cycle. This Drosophila melanogaster (Fruit fly) protein is Glycerol-3-phosphate dehydrogenase [NAD(+)], cytoplasmic.